The primary structure comprises 453 residues: tRNA modification GTPase MnmE (453 aa).

3 residues coordinate (6S)-5-formyl-5,6,7,8-tetrahydrofolate: arginine 22, glutamate 79, and lysine 119. A TrmE-type G domain is found at 215 to 376 (GMKVVIAGRP…LKQHLKSLMG (162 aa)). Asparagine 225 contributes to the K(+) binding site. Residues 225 to 230 (NAGKSS), 244 to 250 (TDIAGTT), 269 to 272 (DTAG), and 334 to 337 (NKAD) each bind GTP. Serine 229 lines the Mg(2+) pocket. K(+) is bound by residues threonine 244, isoleucine 246, and threonine 249. Threonine 250 contacts Mg(2+). (6S)-5-formyl-5,6,7,8-tetrahydrofolate is bound at residue lysine 453.

It belongs to the TRAFAC class TrmE-Era-EngA-EngB-Septin-like GTPase superfamily. TrmE GTPase family. Homodimer. Heterotetramer of two MnmE and two MnmG subunits. The cofactor is K(+).

Its subcellular location is the cytoplasm. Functionally, exhibits a very high intrinsic GTPase hydrolysis rate. Involved in the addition of a carboxymethylaminomethyl (cmnm) group at the wobble position (U34) of certain tRNAs, forming tRNA-cmnm(5)s(2)U34. This Shewanella amazonensis (strain ATCC BAA-1098 / SB2B) protein is tRNA modification GTPase MnmE.